Here is a 258-residue protein sequence, read N- to C-terminus: 5'-nucleotidase SurE (258 aa).

Positions 9, 10, 42, and 96 each coordinate a divalent metal cation.

It belongs to the SurE nucleotidase family. It depends on a divalent metal cation as a cofactor.

The protein resides in the cytoplasm. It carries out the reaction a ribonucleoside 5'-phosphate + H2O = a ribonucleoside + phosphate. Its function is as follows. Nucleotidase that shows phosphatase activity on nucleoside 5'-monophosphates. The polypeptide is 5'-nucleotidase SurE (Campylobacter jejuni subsp. jejuni serotype O:2 (strain ATCC 700819 / NCTC 11168)).